The following is a 316-amino-acid chain: Protein lifeguard 2 (316 aa).

Positions M1–P53 are disordered. 3 helical membrane passes run V106–F126, P138–C158, and F165–M185. An N-linked (GlcNAc...) asparagine glycan is attached at N191. The next 4 helical transmembrane spans lie at S194–F214, G225–L245, V250–A270, and I290–L310.

Belongs to the BI1 family. LFG subfamily. In terms of assembly, interacts with FAS/TNFRSF6 and BAX. Highly expressed in breast carcinoma tissues. Enhanced expression correlates with the grade of the tumor (grade II/grade III) in primary breast tumors (at protein level). Widely expressed. Expressed at high levels in the brain especially in the hippocampus.

Its subcellular location is the cell membrane. It localises to the membrane raft. It is found in the postsynaptic cell membrane. Functionally, antiapoptotic protein which protects cells uniquely from Fas-induced apoptosis. Regulates Fas-mediated apoptosis in neurons by interfering with caspase-8 activation. May play a role in cerebellar development by affecting cerebellar size, internal granular layer (IGL) thickness, and Purkinje cell (PC) development. The sequence is that of Protein lifeguard 2 (FAIM2) from Homo sapiens (Human).